We begin with the raw amino-acid sequence, 425 residues long: Adenylosuccinate synthetase (425 aa).

GTP-binding positions include 12–18 (GDEGKGK) and 40–42 (GHT). Residue aspartate 13 is the Proton acceptor of the active site. Residues aspartate 13 and glycine 40 each coordinate Mg(2+). IMP contacts are provided by residues 13–16 (DEGK), 38–41 (NAGH), threonine 130, arginine 144, glutamine 224, threonine 239, and arginine 301. The active-site Proton donor is the histidine 41. Residue 297-303 (TVSNRRR) participates in substrate binding. Residues arginine 303, 329–331 (KLD), and 411–413 (STS) each bind GTP.

It belongs to the adenylosuccinate synthetase family. In terms of assembly, homodimer. It depends on Mg(2+) as a cofactor.

It localises to the cytoplasm. The catalysed reaction is IMP + L-aspartate + GTP = N(6)-(1,2-dicarboxyethyl)-AMP + GDP + phosphate + 2 H(+). Its pathway is purine metabolism; AMP biosynthesis via de novo pathway; AMP from IMP: step 1/2. Its function is as follows. Plays an important role in the de novo pathway of purine nucleotide biosynthesis. Catalyzes the first committed step in the biosynthesis of AMP from IMP. In Wolbachia pipientis wMel, this protein is Adenylosuccinate synthetase.